A 339-amino-acid polypeptide reads, in one-letter code: Anthranilate phosphoribosyltransferase (339 aa).

Residues G79, 82 to 83 (GD), S87, 89 to 92 (NIST), 107 to 115 (KHGNRSISS), and S119 each bind 5-phospho-alpha-D-ribose 1-diphosphate. G79 provides a ligand contact to anthranilate. Mg(2+) is bound at residue S91. Position 110 (N110) interacts with anthranilate. R165 lines the anthranilate pocket. Residues D224 and E225 each contribute to the Mg(2+) site.

Belongs to the anthranilate phosphoribosyltransferase family. As to quaternary structure, homodimer. Mg(2+) serves as cofactor.

It catalyses the reaction N-(5-phospho-beta-D-ribosyl)anthranilate + diphosphate = 5-phospho-alpha-D-ribose 1-diphosphate + anthranilate. The protein operates within amino-acid biosynthesis; L-tryptophan biosynthesis; L-tryptophan from chorismate: step 2/5. Catalyzes the transfer of the phosphoribosyl group of 5-phosphorylribose-1-pyrophosphate (PRPP) to anthranilate to yield N-(5'-phosphoribosyl)-anthranilate (PRA). The sequence is that of Anthranilate phosphoribosyltransferase from Listeria innocua serovar 6a (strain ATCC BAA-680 / CLIP 11262).